A 331-amino-acid chain; its full sequence is Ketol-acid reductoisomerase (NADP(+)) (331 aa).

A KARI N-terminal Rossmann domain is found at 2–182; sequence IKKYYDADCN…GAGRAGILET (181 aa). Residues 25-28, Arg48, and Ser51 each bind NADP(+); that span reads YGSQ. His108 is an active-site residue. Residue Gly134 coordinates NADP(+). One can recognise a KARI C-terminal knotted domain in the interval 183 to 329; the sequence is TFREETETDL…AELRKMMSWI (147 aa). Mg(2+)-binding residues include Asp191, Glu195, Glu227, and Glu231. Residue Ser252 participates in substrate binding.

This sequence belongs to the ketol-acid reductoisomerase family. It depends on Mg(2+) as a cofactor.

It carries out the reaction (2R)-2,3-dihydroxy-3-methylbutanoate + NADP(+) = (2S)-2-acetolactate + NADPH + H(+). The catalysed reaction is (2R,3R)-2,3-dihydroxy-3-methylpentanoate + NADP(+) = (S)-2-ethyl-2-hydroxy-3-oxobutanoate + NADPH + H(+). The protein operates within amino-acid biosynthesis; L-isoleucine biosynthesis; L-isoleucine from 2-oxobutanoate: step 2/4. It participates in amino-acid biosynthesis; L-valine biosynthesis; L-valine from pyruvate: step 2/4. Involved in the biosynthesis of branched-chain amino acids (BCAA). Catalyzes an alkyl-migration followed by a ketol-acid reduction of (S)-2-acetolactate (S2AL) to yield (R)-2,3-dihydroxy-isovalerate. In the isomerase reaction, S2AL is rearranged via a Mg-dependent methyl migration to produce 3-hydroxy-3-methyl-2-ketobutyrate (HMKB). In the reductase reaction, this 2-ketoacid undergoes a metal-dependent reduction by NADPH to yield (R)-2,3-dihydroxy-isovalerate. This is Ketol-acid reductoisomerase (NADP(+)) from Brachyspira hyodysenteriae (strain ATCC 49526 / WA1).